The following is a 333-amino-acid chain: Holliday junction branch migration complex subunit RuvB (333 aa).

Residues 1–182 are large ATPase domain (RuvB-L); sequence MEERLVSGEV…FGVISRLEYY (182 aa). ATP contacts are provided by residues L21, R22, G63, K66, T67, T68, 129–131, R172, Y182, and R219; that span reads EDY. T67 contacts Mg(2+). Residues 183 to 253 are small ATPAse domain (RuvB-S); the sequence is HVDQLAQIIE…LAVEALERLQ (71 aa). Residues 256 to 333 are head domain (RuvB-H); that stretch reads RLGLDQIDHK…THLGMEVPKR (78 aa). Residues R311 and R316 each contribute to the DNA site.

The protein belongs to the RuvB family. As to quaternary structure, homohexamer. Forms an RuvA(8)-RuvB(12)-Holliday junction (HJ) complex. HJ DNA is sandwiched between 2 RuvA tetramers; dsDNA enters through RuvA and exits via RuvB. An RuvB hexamer assembles on each DNA strand where it exits the tetramer. Each RuvB hexamer is contacted by two RuvA subunits (via domain III) on 2 adjacent RuvB subunits; this complex drives branch migration. In the full resolvosome a probable DNA-RuvA(4)-RuvB(12)-RuvC(2) complex forms which resolves the HJ.

It is found in the cytoplasm. It catalyses the reaction ATP + H2O = ADP + phosphate + H(+). The RuvA-RuvB-RuvC complex processes Holliday junction (HJ) DNA during genetic recombination and DNA repair, while the RuvA-RuvB complex plays an important role in the rescue of blocked DNA replication forks via replication fork reversal (RFR). RuvA specifically binds to HJ cruciform DNA, conferring on it an open structure. The RuvB hexamer acts as an ATP-dependent pump, pulling dsDNA into and through the RuvAB complex. RuvB forms 2 homohexamers on either side of HJ DNA bound by 1 or 2 RuvA tetramers; 4 subunits per hexamer contact DNA at a time. Coordinated motions by a converter formed by DNA-disengaged RuvB subunits stimulates ATP hydrolysis and nucleotide exchange. Immobilization of the converter enables RuvB to convert the ATP-contained energy into a lever motion, pulling 2 nucleotides of DNA out of the RuvA tetramer per ATP hydrolyzed, thus driving DNA branch migration. The RuvB motors rotate together with the DNA substrate, which together with the progressing nucleotide cycle form the mechanistic basis for DNA recombination by continuous HJ branch migration. Branch migration allows RuvC to scan DNA until it finds its consensus sequence, where it cleaves and resolves cruciform DNA. The chain is Holliday junction branch migration complex subunit RuvB from Geobacillus kaustophilus (strain HTA426).